Here is a 91-residue protein sequence, read N- to C-terminus: Small ribosomal subunit protein uS19 (91 aa).

The protein belongs to the universal ribosomal protein uS19 family.

Functionally, protein S19 forms a complex with S13 that binds strongly to the 16S ribosomal RNA. This is Small ribosomal subunit protein uS19 from Cupriavidus necator (strain ATCC 17699 / DSM 428 / KCTC 22496 / NCIMB 10442 / H16 / Stanier 337) (Ralstonia eutropha).